A 1397-amino-acid polypeptide reads, in one-letter code: DNA-directed RNA polymerase subunit beta' (1397 aa).

Positions 75, 77, 90, and 93 each coordinate Zn(2+). Residues D465, D467, and D469 each contribute to the Mg(2+) site. Zn(2+) is bound by residues C819, C893, C900, and C903.

This sequence belongs to the RNA polymerase beta' chain family. As to quaternary structure, the RNAP catalytic core consists of 2 alpha, 1 beta, 1 beta' and 1 omega subunit. When a sigma factor is associated with the core the holoenzyme is formed, which can initiate transcription. Mg(2+) is required as a cofactor. It depends on Zn(2+) as a cofactor.

It catalyses the reaction RNA(n) + a ribonucleoside 5'-triphosphate = RNA(n+1) + diphosphate. Its function is as follows. DNA-dependent RNA polymerase catalyzes the transcription of DNA into RNA using the four ribonucleoside triphosphates as substrates. The chain is DNA-directed RNA polymerase subunit beta' from Acinetobacter baylyi (strain ATCC 33305 / BD413 / ADP1).